The chain runs to 271 residues: 5'-nucleotidase SurE (271 aa).

A divalent metal cation-binding residues include Asp-14, Asp-15, Ser-46, and Asn-104.

The protein belongs to the SurE nucleotidase family. Requires a divalent metal cation as cofactor.

Its subcellular location is the cytoplasm. It catalyses the reaction a ribonucleoside 5'-phosphate + H2O = a ribonucleoside + phosphate. Functionally, nucleotidase that shows phosphatase activity on nucleoside 5'-monophosphates. The sequence is that of 5'-nucleotidase SurE from Gloeothece citriformis (strain PCC 7424) (Cyanothece sp. (strain PCC 7424)).